The following is a 574-amino-acid chain: DNA mismatch repair protein MutL (574 aa).

The protein belongs to the DNA mismatch repair MutL/HexB family.

Its function is as follows. This protein is involved in the repair of mismatches in DNA. It is required for dam-dependent methyl-directed DNA mismatch repair. May act as a 'molecular matchmaker', a protein that promotes the formation of a stable complex between two or more DNA-binding proteins in an ATP-dependent manner without itself being part of a final effector complex. The polypeptide is DNA mismatch repair protein MutL (Coxiella burnetii (strain Dugway 5J108-111)).